The following is a 231-amino-acid chain: MRLVIARCSVDYVGRLKAHLPLATRLLLVKADGSVLVHSDGGSYKPLNWMSPPASLRVSTPDEVDLELGVTEQWTVQSAKTDDRLIINIHEQLHDTSHELGQDPGLIKDGVEADLQRLLADQIERLGTGFSLIRREYFTAIGPVDILARDADGATVAIELKRRGDIDGVEQLTRYLELLNRDPLLAPVRGIFAAQQIKPQAKVLANDRGIDCVTLDYDAMRGVDDSESRLF.

This sequence belongs to the NucS endonuclease family.

The protein resides in the cytoplasm. Cleaves both 3' and 5' ssDNA extremities of branched DNA structures. The polypeptide is Endonuclease NucS (Arthrobacter sp. (strain FB24)).